A 114-amino-acid polypeptide reads, in one-letter code: Putative movement protein (114 aa).

A helical membrane pass occupies residues 27–47 (LIGIILLVTVCLTVLWVCIML). Residues 79–114 (RTPFEATGPERERNWEARRQSTTVNPASQPNTGSVF) form a disordered region. The span at 86-97 (GPERERNWEARR) shows a compositional bias: basic and acidic residues. Polar residues predominate over residues 98-114 (QSTTVNPASQPNTGSVF).

Belongs to the nanovirus movement protein family.

Its subcellular location is the host cell membrane. May transport viral genome to neighboring plant cells directly through plasmosdesmata, without any budding. The movement protein allows efficient cell to cell propagation, by bypassing the host cell wall barrier. This chain is Putative movement protein (DNA-M), found in Faba bean necrotic yellows virus (isolate Egyptian EV1-93) (FBNYV).